The primary structure comprises 485 residues: ATP synthase subunit beta 2 (485 aa).

Basic and acidic residues predominate over residues 1–10 (MSGMGEKSEQ). A disordered region spans residues 1–27 (MSGMGEKSEQISKSARSTDPQEQESVA). Over residues 11-24 (ISKSARSTDPQEQE) the composition is skewed to polar residues. 177-184 (GGAGVGKT) contacts ATP.

Belongs to the ATPase alpha/beta chains family. As to quaternary structure, F-type ATPases have 2 components, CF(1) - the catalytic core - and CF(0) - the membrane proton channel. CF(1) has five subunits: alpha(3), beta(3), gamma(1), delta(1), epsilon(1). CF(0) has three main subunits: a(1), b(2) and c(9-12). The alpha and beta chains form an alternating ring which encloses part of the gamma chain. CF(1) is attached to CF(0) by a central stalk formed by the gamma and epsilon chains, while a peripheral stalk is formed by the delta and b chains.

Its subcellular location is the cell inner membrane. The enzyme catalyses ATP + H2O + 4 H(+)(in) = ADP + phosphate + 5 H(+)(out). Functionally, produces ATP from ADP in the presence of a proton gradient across the membrane. The catalytic sites are hosted primarily by the beta subunits. The protein is ATP synthase subunit beta 2 of Nitrosomonas eutropha (strain DSM 101675 / C91 / Nm57).